Reading from the N-terminus, the 1460-residue chain is MFSFVDLRLLLLLAATALLTHGQEEGQEEDIPPVTCVQNGLRYYDRDVWKPEACRICVCDNGNVLCDDVICDETKNCPGAQVPPGECCPVCPDGEASPTDQETTGVEGPKGDTGPRGPRGPAGPPGRDGIPGQPGLPGPPGPPGPPGPPGLGGNFAPQMSYGYDEKSTGGISVPGPMGPSGPRGLPGPPGAPGPQGFQGPPGEPGEPGASGPMGPRGPPGPPGKNGDDGEAGKPGRPGERGPPGPQGARGLPGTAGLPGMKGHRGFSGLDGAKGDAGPAGPKGEPGSPGENGAPGQMGPRGLPGERGRPGAPGPAGARGNDGATGAAGPPGPTGPAGPPGFPGAVGAKGEAGPQGARGSEGPQGVRGEPGPPGPAGAAGPAGNPGADGQPGAKGANGAPGIAGAPGFPGARGPSGPQGPSGPPGPKGNSGEPGAPGNKGDTGAKGEPGPTGIQGPPGPAGEEGKRGARGEPGPTGLPGPPGERGGPGSRGFPGADGVAGPKGPAGERGSPGPAGPKGSPGEAGRPGEAGLPGAKGLTGSPGSPGPDGKTGPPGPAGQDGRPGPPGPPGARGQAGVMGFPGPKGAAGEPGKAGERGVPGPPGAVGPAGKDGEAGAQGPPGPAGPAGERGEQGPAGSPGFQGLPGPAGPPGEAGKPGEQGVPGDLGAPGPSGARGERGFPGERGVQGPPGPAGPRGANGAPGNDGAKGDAGAPGAPGSQGAPGLQGMPGERGAAGLPGPKGDRGDAGPKGADGSPGKDGVRGLTGPIGPPGPAGAPGDKGEAGPSGPAGPTGARGAPGDRGEPGPPGPAGFAGPPGADGQPGAKGEPGDAGAKGDAGPPGPAGPTGPPGPIGNVGAPGPKGARGSAGPPGATGFPGAAGRVGPPGPSGNAGPPGPPGPAGKEGGKGARGETGPAGRPGEVGPPGPPGPAGEKGSPGADGPAGAPGTPGPQGIAGQRGVVGLPGQRGERGFPGLPGPSGEPGKQGPSGTSGERGPPGPMGPPGLAGPPGESGREGSPGAEGSPGRDGSPGPKGDRGETGPAGPPGAPGAPGAPGPVGPAGKNGDRGETGPAGPAGPIGPVGARGPAGPQGPRGDKGETGEQGDRGIKGHRGFSGLQGPPGPPGSPGEQGPSGASGPAGPRGPPGSAGSPGKDGLNGLPGPIGPPGPRGRTGDAGPVGPPGPPGPPGPPGPPSGGFDFSFLPQPPQEKAHDGGRYYRADDANVVRDRDLEVDTTLKSLSQQIENIRSPEGSRKNPARTCRDLKMCHSDWKSGEYWIDPNQGCNLDAIKVFCNMETGETCVYPTQPQVAQKNWYISKNPKEKRHVWYGESMTDGFQFEYGGQGSDPADVAIQLTFLRLMSTEASQNITYHCKNSVAYMDQQTGNLKKALLLQGSNEIEIRAEGNSRFTYSVTYDGCTSHTGAWGKTVIEYKTTKTSRLPIIDVAPLDVGAPDQEFGMDIGPVCFL.

An N-terminal signal peptide occupies residues 1–22 (MFSFVDLRLLLLLAATALLTHG). Positions 23–157 (QEEGQEEDIP…PPGLGGNFAP (135 aa)) are cleaved as a propeptide — N-terminal propeptide. The VWFC domain maps to 34–92 (VTCVQNGLRYYDRDVWKPEACRICVCDNGNVLCDDVICDETKNCPGAQVPPGECCPVCP). The segment at 96 to 1213 (ASPTDQETTG…KAHDGGRYYR (1118 aa)) is disordered. Positions 134 to 149 (PGLPGPPGPPGPPGPP) are enriched in pro residues. The nonhelical region (N-terminal) stretch occupies residues 158 to 174 (QMSYGYDEKSTGGISVP). An Allysine modification is found at lysine 166. Serine 167 is subject to Phosphoserine. The interval 175 to 1188 (GPMGPSGPRG…PGPPGPPGPP (1014 aa)) is triple-helical region. 4-hydroxyproline is present on residues proline 186, proline 189, proline 192, proline 201, proline 204, proline 207, proline 222, proline 237, proline 243, proline 252, and proline 258. Residues 194 to 213 (PQGFQGPPGEPGEPGASGPM) show a composition bias toward low complexity. The span at 225-239 (NGDDGEAGKPGRPGE) shows a compositional bias: basic and acidic residues. Lysine 261 is subject to 5-hydroxylysine; alternate. An O-linked (Gal...) hydroxylysine; alternate glycan is attached at lysine 261. Phosphoserine is present on serine 267. The span at 275–291 (DAGPAGPKGEPGSPGEN) shows a compositional bias: low complexity. 5 positions are modified to 4-hydroxyproline: proline 285, proline 288, proline 294, proline 303, and proline 309. Residues 314–327 (PAGARGNDGATGAA) show a composition bias toward low complexity. The segment covering 329–341 (PPGPTGPAGPPGF) has biased composition (pro residues). Proline 330, proline 339, proline 342, proline 369, proline 372, proline 384, proline 390, proline 399, proline 405, proline 408, and proline 423 each carry 4-hydroxyproline. Low complexity predominate over residues 375 to 414 (AGAAGPAGNPGADGQPGAKGANGAPGIAGAPGFPGARGPS). Lysine 426 carries the 5-hydroxylysine modification. 8 positions are modified to 4-hydroxyproline: proline 432, proline 435, proline 447, proline 456, proline 471, proline 477, proline 486, and proline 492. The span at 481–490 (GERGGPGSRG) shows a compositional bias: gly residues. Position 501 is a 5-hydroxylysine (lysine 501). 4-hydroxyproline occurs at positions 510, 519, 525, 531, 540, 543, 552, 561, 567, 579, 588, 597, 600, 618, 636, 642, 648, 654, 660, 666, 678, 687, 699, 711, 714, 720, 726, and 735. Low complexity predominate over residues 534 to 560 (KGLTGSPGSPGPDGKTGPPGPAGQDGR). Over residues 569 to 588 (ARGQAGVMGFPGPKGAAGEP) the composition is skewed to low complexity. Residues 630 to 657 (QGPAGSPGFQGLPGPAGPPGEAGKPGEQ) are compositionally biased toward low complexity. The span at 692–720 (PRGANGAPGNDGAKGDAGAPGAPGSQGAP) shows a compositional bias: low complexity. A Cell attachment site motif is present at residues 741–743 (RGD). Position 747 is a 5-hydroxylysine (lysine 747). 4-hydroxyproline occurs at positions 753, 768, and 774. Low complexity predominate over residues 780–794 (AGPSGPAGPTGARGA). Residue serine 783 is modified to Phosphoserine. 8 positions are modified to 4-hydroxyproline: proline 795, proline 801, proline 804, proline 813, proline 819, proline 837, proline 846, and proline 855. A compositionally biased stretch (low complexity) spans 807-834 (AGFAGPPGADGQPGAKGEPGDAGAKGDA). Positions 836-848 (PPGPAGPTGPPGP) are enriched in pro residues. Lysine 858 carries the post-translational modification 5-hydroxylysine. The span at 863–879 (SAGPPGATGFPGAAGRV) shows a compositional bias: low complexity. 4-hydroxyproline is present on residues proline 867 and proline 873. A 3-hydroxyproline modification is found at proline 881. 4-hydroxyproline is present on residues proline 882, proline 891, proline 894, proline 915, proline 924, proline 933, proline 942, proline 960, proline 969, proline 972, proline 978, proline 993, proline 999, proline 1005, proline 1014, and proline 1020. Positions 908 to 917 (ETGPAGRPGE) are enriched in low complexity. The span at 927–951 (AGEKGSPGADGPAGAPGTPGPQGIA) shows a compositional bias: low complexity. A compositionally biased stretch (pro residues) spans 992–1002 (PPGPMGPPGLA). The span at 1004–1019 (PPGESGREGSPGAEGS) shows a compositional bias: low complexity. Position 1029 is a 5-hydroxylysine (lysine 1029). Over residues 1038 to 1053 (AGPPGAPGAPGAPGPV) the composition is skewed to pro residues. 4-hydroxyproline is present on residues proline 1041, proline 1044, and proline 1047. Positions 1074-1088 (IGPVGARGPAGPQGP) are enriched in low complexity. A Cell attachment site motif is present at residues 1089–1091 (RGD). The segment covering 1089–1103 (RGDKGETGEQGDRGI) has biased composition (basic and acidic residues). Lysine 1092 bears the 5-hydroxylysine mark. At lysine 1104 the chain carries 5-hydroxylysine; alternate. Lysine 1104 is a glycosylation site (O-linked (Gal...) hydroxylysine; alternate). 5 positions are modified to 4-hydroxyproline: proline 1116, proline 1119, proline 1122, proline 1140, and proline 1155. Residues 1122–1155 (PGEQGPSGASGPAGPRGPPGSAGSPGKDGLNGLP) are compositionally biased toward low complexity. Residue proline 1160 is modified to 3-hydroxyproline. Proline 1161 carries the 4-hydroxyproline modification. The span at 1173–1188 (VGPPGPPGPPGPPGPP) shows a compositional bias: pro residues. Proline 1175 is modified (3-hydroxyproline). A 4-hydroxyproline modification is found at proline 1176. 3-hydroxyproline is present on proline 1178. At proline 1179 the chain carries 4-hydroxyproline. At proline 1181 the chain carries 3-hydroxyproline. Residues proline 1182, proline 1185, and proline 1188 each carry the 4-hydroxyproline modification. The interval 1189 to 1214 (SGGFDFSFLPQPPQEKAHDGGRYYRA) is nonhelical region (C-terminal). Over residues 1203–1213 (EKAHDGGRYYR) the composition is skewed to basic and acidic residues. Lysine 1204 is subject to Allysine. The propeptide at 1215-1460 (DDANVVRDRD…GMDIGPVCFL (246 aa)) is C-terminal propeptide. The region spanning 1225 to 1460 (LEVDTTLKSL…GMDIGPVCFL (236 aa)) is the Fibrillar collagen NC1 domain. 3 disulfides stabilise this stretch: cysteine 1255–cysteine 1287, cysteine 1295–cysteine 1458, and cysteine 1366–cysteine 1411. Aspartate 1273, asparagine 1275, glutamine 1276, cysteine 1278, and aspartate 1281 together coordinate Ca(2+). N-linked (GlcNAc...) asparagine glycosylation is present at asparagine 1361.

This sequence belongs to the fibrillar collagen family. In terms of assembly, trimers of one alpha 2(I) and two alpha 1(I) chains. Interacts with MRC2. Interacts with TRAM2. Interacts with MFAP4 in a Ca (2+)-dependent manner. Post-translationally, contains mostly 4-hydroxyproline. Proline residues at the third position of the tripeptide repeating unit (G-X-Y) are hydroxylated in some or all of the chains. Contains 3-hydroxyproline at a few sites. This modification occurs on the first proline residue in the sequence motif Gly-Pro-Hyp, where Hyp is 4-hydroxyproline. In terms of processing, lysine residues at the third position of the tripeptide repeating unit (G-X-Y) are 5-hydroxylated in some or all of the chains. Post-translationally, O-glycosylated on hydroxylated lysine residues. The O-linked glycan consists of a Glc-Gal disaccharide.

Its subcellular location is the secreted. The protein localises to the extracellular space. The protein resides in the extracellular matrix. Functionally, type I collagen is a member of group I collagen (fibrillar forming collagen). This chain is Collagen alpha-1(I) chain (COL1A1), found in Canis lupus familiaris (Dog).